Consider the following 315-residue polypeptide: Calumenin (315 aa).

The signal sequence occupies residues 1–19; sequence MDLRQFLMCLSLCTAFALS. Serine 44 bears the Phosphoserine mark. The residue at position 47 (tyrosine 47) is a Phosphotyrosine. A Phosphothreonine modification is found at threonine 65. EF-hand domains lie at 68–103, 104–139, 151–186, 188–223, 229–264, and 265–300; these read ESKE…AQKR, WIYE…YVLD, QMMV…EEYD, MKDI…HDGN, WVKT…SDYD, and HAEA…FVGS. At serine 69 the chain carries Phosphoserine. The Ca(2+) site is built by aspartate 81, aspartate 83, aspartate 85, glutamate 92, aspartate 117, asparagine 119, aspartate 121, and glutamate 128. Asparagine 131 is a glycosylation site (N-linked (GlcNAc...) asparagine). Position 164 (aspartate 164) interacts with Ca(2+). Lysine 165 is subject to N6-acetyllysine. Residues aspartate 166, aspartate 168, glutamate 175, aspartate 201, asparagine 203, aspartate 205, glutamate 212, aspartate 242, asparagine 244, aspartate 246, lysine 248, and glutamate 253 each coordinate Ca(2+). At threonine 254 the chain carries Phosphothreonine. Residues serine 261 and serine 277 each carry the phosphoserine modification. Ca(2+) contacts are provided by aspartate 278, asparagine 280, aspartate 282, lysine 284, and glutamate 289. A Prevents secretion from ER motif is present at residues 312–315; that stretch reads HDEF.

This sequence belongs to the CREC family. As to quaternary structure, interacts with GGCX.

It localises to the endoplasmic reticulum membrane. Its subcellular location is the golgi apparatus. It is found in the secreted. The protein localises to the melanosome. The protein resides in the sarcoplasmic reticulum lumen. Involved in regulation of vitamin K-dependent carboxylation of multiple N-terminal glutamate residues. Seems to inhibit gamma-carboxylase GGCX. Binds 7 calcium ions with a low affinity. The sequence is that of Calumenin (CALU) from Pongo abelii (Sumatran orangutan).